Reading from the N-terminus, the 104-residue chain is Large ribosomal subunit protein uL24 (104 aa).

This sequence belongs to the universal ribosomal protein uL24 family. As to quaternary structure, part of the 50S ribosomal subunit.

Functionally, one of two assembly initiator proteins, it binds directly to the 5'-end of the 23S rRNA, where it nucleates assembly of the 50S subunit. One of the proteins that surrounds the polypeptide exit tunnel on the outside of the subunit. This chain is Large ribosomal subunit protein uL24, found in Bradyrhizobium sp. (strain BTAi1 / ATCC BAA-1182).